The primary structure comprises 216 residues: Early E3 25 kDa glycoprotein (216 aa).

Residues asparagine 25, asparagine 82, asparagine 97, asparagine 109, asparagine 142, asparagine 147, and asparagine 160 are each glycosylated (N-linked (GlcNAc...) asparagine; by host).

This is Early E3 25 kDa glycoprotein from Canis lupus familiaris (Dog).